Consider the following 666-residue polypeptide: Magnesium-chelatase 67 kDa subunit (666 aa).

37–44 (GRRGTGKT) provides a ligand contact to ATP. Positions 327 to 367 (LPDEEEQMQPPPPPPPPPPPPEPDKPDDPETPPDEAPKDEQ) are disordered. Residues 335–347 (QPPPPPPPPPPPP) show a composition bias toward pro residues. Positions 475-661 (LIIFVVDASG…SLAETVKSGV (187 aa)) constitute a VWFA domain.

Belongs to the Mg-chelatase subunits D/I family.

It carries out the reaction protoporphyrin IX + Mg(2+) + ATP + H2O = Mg-protoporphyrin IX + ADP + phosphate + 3 H(+). It participates in porphyrin-containing compound metabolism; bacteriochlorophyll biosynthesis. Its function is as follows. Involved in bacteriochlorophyll biosynthesis; introduces a magnesium ion into protoporphyrin IX to yield Mg-protoporphyrin IX. This Heliobacterium mobile (Heliobacillus mobilis) protein is Magnesium-chelatase 67 kDa subunit (bchD).